Reading from the N-terminus, the 320-residue chain is Eukaryotic translation initiation factor 3 subunit G (320 aa).

Positions 1–59 (MPTGDFDSKPSWADQVEEEGEDDKCVTSELLKGIPLATGDTSPEPELLPGAPLPPPKEV) are disordered. Serine 8 and serine 11 each carry phosphoserine. 2 positions are modified to phosphothreonine: threonine 38 and threonine 41. Residues serine 42, serine 189, serine 223, and serine 264 each carry the phosphoserine modification. The tract at residues 209-234 (KTGKYVPPSLRDGASRRGESMQPNRR) is disordered. A compositionally biased stretch (basic and acidic residues) spans 221–234 (GASRRGESMQPNRR). In terms of domain architecture, RRM spans 239 to 317 (ATIRVTNLSE…LILNVEWAKP (79 aa)).

Component of the eukaryotic translation initiation factor 3 (eIF-3) complex, which is composed of 13 subunits: EIF3A, EIF3B, EIF3C, EIF3D, EIF3E, EIF3F, EIF3G, EIF3H, EIF3I, EIF3J, EIF3K, EIF3L and EIF3M. The eIF-3 complex appears to include 3 stable modules: module A is composed of EIF3A, EIF3B, EIF3G and EIF3I; module B is composed of EIF3F, EIF3H, and EIF3M; and module C is composed of EIF3C, EIF3D, EIF3E, EIF3K and EIF3L. EIF3C of module C binds EIF3B of module A and EIF3H of module B, thereby linking the three modules. EIF3J is a labile subunit that binds to the eIF-3 complex via EIF3B. The eIF-3 complex interacts with RPS6KB1 under conditions of nutrient depletion. Mitogenic stimulation leads to binding and activation of a complex composed of MTOR and RPTOR, leading to phosphorylation and release of RPS6KB1 and binding of EIF4B to eIF-3. Interacts (via C-terminus) with AIFM1 (via N-terminus). Interacts with DHX33; the interaction is independent of RNA. In terms of processing, phosphorylated. Phosphorylation is enhanced upon serum stimulation.

It is found in the cytoplasm. Its subcellular location is the nucleus. It localises to the perinuclear region. RNA-binding component of the eukaryotic translation initiation factor 3 (eIF-3) complex, which is required for several steps in the initiation of protein synthesis. The eIF-3 complex associates with the 40S ribosome and facilitates the recruitment of eIF-1, eIF-1A, eIF-2:GTP:methionyl-tRNAi and eIF-5 to form the 43S pre-initiation complex (43S PIC). The eIF-3 complex stimulates mRNA recruitment to the 43S PIC and scanning of the mRNA for AUG recognition. The eIF-3 complex is also required for disassembly and recycling of post-termination ribosomal complexes and subsequently prevents premature joining of the 40S and 60S ribosomal subunits prior to initiation. The eIF-3 complex specifically targets and initiates translation of a subset of mRNAs involved in cell proliferation, including cell cycling, differentiation and apoptosis, and uses different modes of RNA stem-loop binding to exert either translational activation or repression. This subunit can bind 18S rRNA. In terms of biological role, (Microbial infection) In case of FCV infection, plays a role in the ribosomal termination-reinitiation event leading to the translation of VP2. In Homo sapiens (Human), this protein is Eukaryotic translation initiation factor 3 subunit G.